The sequence spans 381 residues: Diguanylate cyclase DosC (381 aa).

His-98 is a binding site for heme. In terms of domain architecture, GGDEF spans 325 to 381 (TPLSVLIIDVDKFKEINDTWGHNTGDEILRKVSFLSQKRLVKSKILGAGSSRKLAVS). Position 333 (Asp-333) interacts with Mg(2+). Substrate-binding residues include Asn-341 and Asp-350.

Requires heme as cofactor. The cofactor is Mg(2+).

The enzyme catalyses 2 GTP = 3',3'-c-di-GMP + 2 diphosphate. Its pathway is purine metabolism; 3',5'-cyclic di-GMP biosynthesis. Globin-coupled heme-based oxygen sensor protein displaying diguanylate cyclase (DGC) activity in response to oxygen availability. Thus, catalyzes the synthesis of cyclic diguanylate (c-di-GMP) via the condensation of 2 GTP molecules. Cyclic-di-GMP is a second messenger which controls cell surface-associated traits in bacteria. The chain is Diguanylate cyclase DosC (dosC) from Shigella flexneri serotype 5b (strain 8401).